The sequence spans 117 residues: MATYSLANERLRALEDIEREIGAILQNAGTAILELSKEKTNERLLDRQAAAFTTSVQHVEAELSAQIRYLTQVATGQPHEGSSYSSRKDCQMALKRVDYARLKISDVARTCEQMLEN.

Alanine 2 carries the N-acetylalanine modification.

It belongs to the Mediator complex subunit 11 family. In terms of assembly, component of the Mediator complex, which is composed of MED1, MED4, MED6, MED7, MED8, MED9, MED10, MED11, MED12, MED13, MED13L, MED14, MED15, MED16, MED17, MED18, MED19, MED20, MED21, MED22, MED23, MED24, MED25, MED26, MED27, MED29, MED30, MED31, CCNC, CDK8 and CDC2L6/CDK11. The MED12, MED13, CCNC and CDK8 subunits form a distinct module termed the CDK8 module. Mediator containing the CDK8 module is less active than Mediator lacking this module in supporting transcriptional activation. Individual preparations of the Mediator complex lacking one or more distinct subunits have been variously termed ARC, CRSP, DRIP, PC2, SMCC and TRAP. In terms of tissue distribution, expressed in cochlea.

Its subcellular location is the nucleus. Component of the Mediator complex, a coactivator involved in the regulated transcription of nearly all RNA polymerase II-dependent genes. Mediator functions as a bridge to convey information from gene-specific regulatory proteins to the basal RNA polymerase II transcription machinery. Mediator is recruited to promoters by direct interactions with regulatory proteins and serves as a scaffold for the assembly of a functional pre-initiation complex with RNA polymerase II and the general transcription factors. In Mus musculus (Mouse), this protein is Mediator of RNA polymerase II transcription subunit 11 (Med11).